Here is a 63-residue protein sequence, read N- to C-terminus: Lantibiotic mutacin-1140 (63 aa).

The propeptide occupies 1–41 (MSNTQLLEVLGTETFDVQEDLFAFDTTDTTIVASNDDPDTR). A cross-link (lanthionine (Ser-Cys)) is located at residues 44–48 (SWSLC). S46 carries the post-translational modification 2,3-didehydroalanine (Ser). The beta-methyllanthionine (Thr-Cys) cross-link spans 49 to 52 (TPGC). Residue T55 is modified to 2,3-didehydrobutyrine. Positions 57–62 (SFNSYC) form a cross-link, lanthionine (Ser-Cys). The S-(2-aminovinyl)-D-cysteine (Ser-Cys) cross-link spans 60 to 63 (SYCC).

Belongs to the type A lantibiotic family. In terms of processing, maturation of lantibiotics involves the enzymatic conversion of Thr, and Ser into dehydrated AA and the formation of thioether bonds with cysteine. The C-terminal lanthionine undergoes decarboxylation. This is followed by membrane translocation and cleavage of the modified precursor. Post-translationally, the structure of the 2,3-didehydrobutyrine is not discussed in PubMed:11082191.

Lanthionine-containing peptide antibiotic (lantibiotic) active on Gram-positive bacteria. The bactericidal activity of lantibiotics is based on depolarization of energized bacterial cytoplasmic membranes, initiated by the formation of aqueous transmembrane pores. In Streptococcus mutans, this protein is Lantibiotic mutacin-1140 (lanA).